Consider the following 708-residue polypeptide: Probable inactive lysine-specific demethylase JMJ19 (708 aa).

A disordered region spans residues 35 to 59 (VPRDKESPRSVSRQEQTTGFGTDDK). The span at 43-54 (RSVSRQEQTTGF) shows a compositional bias: polar residues. The JmjN domain occupies 108–149 (APVFNPTEEEFRDTLSYISSLRDRAEPYGICCVVPPPSWKPP). A JmjC domain is found at 293 to 454 (SSGWNLNSTA…HGDIAVQVNQ (162 aa)). Positions 544, 547, 558, 560, 567, 570, 575, and 577 each coordinate Zn(2+). Residues 544–581 (CCVCLGDLYLSAVNCSCSANRYSCLNHMRKLCACPCDR) form an RING-type; degenerate zinc finger. The Nuclear localization signal motif lies at 646 to 653 (TRKDVAAG). Residues 678–694 (AKETLESCSKKSNRPCD) are compositionally biased toward basic and acidic residues. Residues 678–708 (AKETLESCSKKSNRPCDNDSSEANAPKKQKQ) are disordered.

The protein belongs to the JARID1 histone demethylase family. As to expression, expressed in inflorescences, roots, siliques, leaves and stems.

It is found in the nucleus. This Arabidopsis thaliana (Mouse-ear cress) protein is Probable inactive lysine-specific demethylase JMJ19.